A 679-amino-acid chain; its full sequence is MSKQEAVSELTKQQAQAELTPLREQLKKWGAEYYEQDNPSVEDYVYDRAYQRLVEIEQRFPDLVVPDSPTQRVGGAAESQLNKVTHEIPMLSMGDVFSLAELADFNRRQQDNSDVKVDFDYNLELKIDGLSLSLVYENGRLVQGSTRGNGTIGEDVTENVKTIKSIPQVLPEPLSLEFRGECYMPKEAFVKLNERREAEGQPVFANPRNAAAGSLRQLDPKVTAARQLDTFMYYVPDYQALGVTTQAQALEKMRALGFAVNPNYRVVHSQAELTAYIEEYTKKRDQLPYGIDGIVEKVNDLATQVALGNTVKVPRWEIAYKFPPEEQATVVRDIEWTVGRTGNVTPTAVMDPVQLAGTTVSRASLHNPDYLVEKDIRLGDTVLLHKAGDIIPEISRVIIEKRPADSKPYEVPTTCPECGADLVHLDDEVALRCVNPMCPAQIKEGLAHFASRNAMNIDGLGPKIIEQLWDKGMVKDVADLYRLEAAQLLTLPKFGEKSISNLLTAIANSRHNSCERLLFGLGIRHVGAKVAQLLAAEFKSVDALMAADAATISAVDSIGPIIGDAVATYFQNEQVHQLIAELKEVGVNMDYLAPTTSATESAEWAGKRVVLTGKLTKMTRGQAQEWLSARGASVTGSVSKKTDLLIAGEKAGSKLEKAQTLGIEVWDEDRFDQAMKEEN.

Residues 43–47 (DYVYD), 92–93 (SM), and Glu124 each bind NAD(+). The N6-AMP-lysine intermediate role is filled by Lys126. 4 residues coordinate NAD(+): Arg147, Glu181, Lys297, and Lys321. Zn(2+) is bound by residues Cys415, Cys418, Cys433, and Cys438. Residues 599–679 (TESAEWAGKR…RFDQAMKEEN (81 aa)) enclose the BRCT domain.

It belongs to the NAD-dependent DNA ligase family. LigA subfamily. The cofactor is Mg(2+). Mn(2+) is required as a cofactor.

It carries out the reaction NAD(+) + (deoxyribonucleotide)n-3'-hydroxyl + 5'-phospho-(deoxyribonucleotide)m = (deoxyribonucleotide)n+m + AMP + beta-nicotinamide D-nucleotide.. In terms of biological role, DNA ligase that catalyzes the formation of phosphodiester linkages between 5'-phosphoryl and 3'-hydroxyl groups in double-stranded DNA using NAD as a coenzyme and as the energy source for the reaction. It is essential for DNA replication and repair of damaged DNA. This Limosilactobacillus fermentum (strain NBRC 3956 / LMG 18251) (Lactobacillus fermentum) protein is DNA ligase.